Reading from the N-terminus, the 241-residue chain is Uracil-DNA glycosylase (241 aa).

Residue D71 is the Proton acceptor of the active site.

Belongs to the uracil-DNA glycosylase (UDG) superfamily. UNG family.

Its subcellular location is the cytoplasm. The enzyme catalyses Hydrolyzes single-stranded DNA or mismatched double-stranded DNA and polynucleotides, releasing free uracil.. Functionally, excises uracil residues from the DNA which can arise as a result of misincorporation of dUMP residues by DNA polymerase or due to deamination of cytosine. In Xanthomonas euvesicatoria pv. vesicatoria (strain 85-10) (Xanthomonas campestris pv. vesicatoria), this protein is Uracil-DNA glycosylase.